We begin with the raw amino-acid sequence, 213 residues long: Small ribosomal subunit protein uS3c (213 aa).

The KH type-2 domain maps to 39–109 (IRKYLNAKLA…KFRITITYLQ (71 aa)).

It belongs to the universal ribosomal protein uS3 family. In terms of assembly, part of the 30S ribosomal subunit.

It localises to the plastid. The protein resides in the chloroplast. This Mesostigma viride (Green alga) protein is Small ribosomal subunit protein uS3c (rps3).